The primary structure comprises 475 residues: MKNFQDKIKKLVPEMRRVNQIHFIGIGGAGMSGIAEVLLNEGYQISGSDIAEGPVTKRLAEAGAKVFIGHQAENVAGASVVVASSAIDDSNPEVRAAKEARIPVIQRAQMLAEIMRFRHGIAVAGTHGKTTTTAMISMIYTEAKLDPTFVNGGLVKSAGKNAHLGASRYLIAEADESDASFLHLQPMVSVVTNIEPDHMDTYGGDFEQMKATYVKFLRNLPFYGLAVMCADDETVIEIAPQVGRQVLTYGFSEKADYRIEDYQQTGFQGHYTVVCPNGERIDVLLNVPGKHNALNATAALAVAKEEGIANEAILAALADFQGAGRRFDQLGSFIRPNGKVMLVDDYGHHPTEVDVTIKAARSGWENKRVVMIFQPHRYSRTRDLFDDFVQVLSQVDALIMLEVYAAGEAPIVGADSKALCRSIRNLGKVDPILVSDTDQLGEVLDQIIQDGDLILAQGAGSVSRISRGLAESWKA.

125 to 131 is a binding site for ATP; it reads GTHGKTT.

This sequence belongs to the MurCDEF family.

The protein resides in the cytoplasm. The enzyme catalyses UDP-N-acetyl-alpha-D-muramate + L-alanine + ATP = UDP-N-acetyl-alpha-D-muramoyl-L-alanine + ADP + phosphate + H(+). It functions in the pathway cell wall biogenesis; peptidoglycan biosynthesis. Its function is as follows. Cell wall formation. This is UDP-N-acetylmuramate--L-alanine ligase from Actinobacillus pleuropneumoniae serotype 5b (strain L20).